The sequence spans 354 residues: Protein RecA (354 aa).

Residue Gly-65 to Thr-72 coordinates ATP.

Belongs to the RecA family.

The protein resides in the cytoplasm. Can catalyze the hydrolysis of ATP in the presence of single-stranded DNA, the ATP-dependent uptake of single-stranded DNA by duplex DNA, and the ATP-dependent hybridization of homologous single-stranded DNAs. It interacts with LexA causing its activation and leading to its autocatalytic cleavage. The protein is Protein RecA of Aeromonas hydrophila subsp. hydrophila (strain ATCC 7966 / DSM 30187 / BCRC 13018 / CCUG 14551 / JCM 1027 / KCTC 2358 / NCIMB 9240 / NCTC 8049).